The following is a 640-amino-acid chain: MPVVTLPDGSKREYEAPVRVADVAQSIGSGLAKAALGGIVDGQMVDTSFVIDKDSHLAIITDKSPEALEIVRHSTAHLLAYAVKELFPEAQVTIGPVIENGFYYDFSYHRPFTPDDLVALEKKMTELAKKDEPVVRTVMPRDEAVEFFKQQGENYKAELIASIPQGEDVSLYAEGKFTDLCRGPHVPSTGKLKVFKLMKLAGAYWRGDSKNEMLQRIYGTAWLRKEDQDAYLHMLEESEKRDHRRLGKQLDLFHFQEEAPGLIFWHPKGWSIWQEVEQYMRRVYQNEGYQEVKAPQILDRGLWEKSGHWDNYKENMFTTESENRAYALKPMNCPGHVQIYNSGLHSYRELPLRFGEFGQCHRNEPSGALHGLMRVRGFTQDDGHIFCTEDQIQSEVAAFDKAVRAVYQDFGFTEVAVKLALRPAKRVGDDAIWDKAEDALRGALKASGQEWEELPGEGAFYGPKIEYHLKDSIGRTWQCGTIQVDFSMPARLGAEYVAEDNSRKTPVMLHRAIVGSLERFIGILIENHAGNMPVWLAPTQAVVLNISGNSAAYAQKVQQSLKKQGFRVESDLRNEKITYKIREHALQKIPFLLVVGDKESESNTVAVRARGGVDLGVMPLDAFVARLQQDISQKVGPEPS.

Positions Met-1–Thr-61 constitute a TGS domain. The catalytic stretch occupies residues Asp-242–Pro-533. Zn(2+) is bound by residues Cys-333, His-384, and His-510.

Belongs to the class-II aminoacyl-tRNA synthetase family. In terms of assembly, homodimer. The cofactor is Zn(2+).

The protein resides in the cytoplasm. It carries out the reaction tRNA(Thr) + L-threonine + ATP = L-threonyl-tRNA(Thr) + AMP + diphosphate + H(+). Functionally, catalyzes the attachment of threonine to tRNA(Thr) in a two-step reaction: L-threonine is first activated by ATP to form Thr-AMP and then transferred to the acceptor end of tRNA(Thr). Also edits incorrectly charged L-seryl-tRNA(Thr). This chain is Threonine--tRNA ligase, found in Polynucleobacter asymbioticus (strain DSM 18221 / CIP 109841 / QLW-P1DMWA-1) (Polynucleobacter necessarius subsp. asymbioticus).